Consider the following 1144-residue polypeptide: Nitric oxide synthase, inducible (1144 aa).

A DINNN-motif; mediates interaction with SPSB1, SPSB2 and SPSB4 motif is present at residues 23–27 (DINNN). A disordered region spans residues 37 to 59 (SPTIQDDPKSHQNGSPQLLTGTA). Polar residues predominate over residues 47 to 59 (HQNGSPQLLTGTA). Positions 104 and 109 each coordinate Zn(2+). Ser-112 is a binding site for (6R)-L-erythro-5,6,7,8-tetrahydrobiopterin. Cys-194 is a binding site for heme b. Positions 257, 366, 367, and 371 each coordinate L-arginine. Arg-375, Ile-456, Trp-457, and Phe-470 together coordinate (6R)-L-erythro-5,6,7,8-tetrahydrobiopterin. Tyr-485 contacts heme b. A calmodulin-binding region spans residues 509-529 (FRVLVKVVFFASMLMRKVMAS). One can recognise a Flavodoxin-like domain in the interval 533-671 (ATVLFATETG…AFRSWAVQTF (139 aa)). FMN-binding residues include Thr-539, Glu-540, Thr-541, Lys-543, and Ser-544. Tyr-569 bears the Phosphotyrosine mark. Positions 585, 586, 622, 629, 655, and 659 each coordinate FMN. Residues 724 to 964 (KNVFTMRLKS…VRSVSGFQLP (241 aa)) form the FAD-binding FR-type domain. Arg-744 contributes to the NADP(+) binding site. 6 residues coordinate FAD: His-766, Arg-900, Tyr-902, Ser-903, Thr-918, and Ala-920. An NADP(+)-binding site is contributed by Thr-923. The FAD site is built by Tyr-924, Val-937, Cys-938, and Ser-939. Residues Thr-978, Arg-1011, Ser-1040, Arg-1041, Lys-1047, Tyr-1049, Gln-1051, and Asp-1084 each contribute to the NADP(+) site.

This sequence belongs to the NOS family. In terms of assembly, homodimer. Interacts with NHERF1. Interacts with GAPDH. Interacts with S100A8 and S100A9 to form the iNOS-S100A8/9 transnitrosylase complex. Interacts with SPSB1, SPSB2 and SPSB4. Interacts with ELOC and CUL5 in the presence of SPSB1 or SPSB2 or SPSB4. Forms a complex with ASL, ASS1 and HSP90AA1; the complex regulates cell-autonomous L-arginine synthesis and citrulline recycling while channeling extracellular L-arginine to nitric oxide synthesis pathway. It depends on heme b as a cofactor. The cofactor is FAD. FMN is required as a cofactor. Requires (6R)-L-erythro-5,6,7,8-tetrahydrobiopterin as cofactor. In terms of processing, polyubiquitinated; mediated by SPSB1, SPSB2 and SPSB4, leading to proteasomal degradation. Macrophages.

Its subcellular location is the cytoplasm. It is found in the cytosol. It carries out the reaction 2 L-arginine + 3 NADPH + 4 O2 + H(+) = 2 L-citrulline + 2 nitric oxide + 3 NADP(+) + 4 H2O. With respect to regulation, not stimulated by calcium/calmodulin. Aspirin inhibits expression and function of this enzyme and effects may be exerted at the level of translational/post-translational modification and directly on the catalytic activity. Produces nitric oxide (NO) which is a messenger molecule with diverse functions throughout the body. In macrophages, NO mediates tumoricidal and bactericidal actions. Also has nitrosylase activity and mediates cysteine S-nitrosylation of cytoplasmic target proteins such PTGS2/COX2. As component of the iNOS-S100A8/9 transnitrosylase complex involved in the selective inflammatory stimulus-dependent S-nitrosylation of GAPDH implicated in regulation of the GAIT complex activity and probably multiple targets including ANXA5, EZR, MSN and VIM. Involved in inflammation, enhances the synthesis of pro-inflammatory mediators such as IL6 and IL8. This is Nitric oxide synthase, inducible (Nos2) from Mus musculus (Mouse).